The sequence spans 148 residues: MWNPNAGQPGPNPYPPNIGCPGGSNPAHPPPINPPFPPGPCPPPPGAPHGNPAFPPGGPPHPVPQPGYPGCQPLGPYPPPYPPPAPGIPPVNPLAPGMVGPAVIVDKKMQKKMKKAHKKMHKHQKHHKYHKHGKHSSSSSSSSSSDSD.

The segment at 1-148 (MWNPNAGQPG…SSSSSSSDSD (148 aa)) is disordered. Composition is skewed to pro residues over residues 27–67 (AHPP…PQPG) and 75–93 (GPYP…PVNP). Residues 109 to 135 (MQKKMKKAHKKMHKHQKHHKYHKHGKH) are compositionally biased toward basic residues. The segment covering 136–148 (SSSSSSSSSSDSD) has biased composition (low complexity).

It is found in the nucleus. Its function is as follows. Negatively regulates TSP1 expression at the level of transcription. This down-regulation was shown to reduce taxane-induced apoptosis. The sequence is that of Proline-rich protein 13 (PRR13) from Homo sapiens (Human).